The following is a 383-amino-acid chain: Centractin (383 aa).

The tract at residues 227-246 is disordered; the sequence is PQKEEELLEPDSSSSKPVQP.

It belongs to the actin family. ARP1 subfamily.

The protein resides in the cytoplasm. The protein localises to the cytoskeleton. It is found in the microtubule organizing center. It localises to the centrosome. Component of a multi-subunit complex, PPK2 (poly P kinase complex 2) involved in microtubule based vesicle motility. It is associated with the centrosome. PPK2 complex can synthesize a poly chain of hundreds of phosphate residues linked by ATP-like bonds. The polypeptide is Centractin (arpA) (Dictyostelium discoideum (Social amoeba)).